We begin with the raw amino-acid sequence, 319 residues long: Zinc finger protein C19B12.07c (319 aa).

A C2H2-type zinc finger spans residues phenylalanine 146–histidine 170.

The protein belongs to the ZNF277 family.

Its subcellular location is the nucleus. The protein is Zinc finger protein C19B12.07c of Schizosaccharomyces pombe (strain 972 / ATCC 24843) (Fission yeast).